Here is a 622-residue protein sequence, read N- to C-terminus: Palmitoyltransferase ZDHHC17 (622 aa).

The Cytoplasmic segment spans residues 1-294 (MADGPDEYDT…LKADKEFRQK (294 aa)). Residues 1–295 (MADGPDEYDT…KADKEFRQKV (295 aa)) are necessary and sufficient for interaction with DNAJC5 and SNAP25. 7 ANK repeats span residues 41-76 (THVD…VRQP), 79-108 (ENVT…IVDQ), 113-142 (LNST…DPSL), 146-175 (EGCS…DVDM), 179-209 (NGMT…SVNL), 214-243 (HKNT…NVDA), and 247-276 (KGES…AKGY). Helical transmembrane passes span 295–315 (VMLG…DLNI) and 316–336 (DSWL…QFLS). Over 337–347 (KSFFDHSMHSA) the chain is Lumenal. A helical membrane pass occupies residues 348-368 (LPLGIYLATKFWMYVTWFFWF). Residues 369–371 (WND) lie on the Cytoplasmic side of the membrane. Residues 372 to 392 (LSFLSIHLPFLANSVALFYNF) traverse the membrane as a helical segment. The Lumenal portion of the chain corresponds to 393–470 (GKSWKSDPGI…GNCVGAGNHR (78 aa)). A DHHC domain is found at 427–477 (IFCSTCLIRKPVRSKHCGVCNRCIAKFDHHCPWVGNCVGAGNHRYFMGYLF). Cys-457 serves as the catalytic S-palmitoyl cysteine intermediate. Residues 471–491 (YFMGYLFFLLFMICWMIYGCV) traverse the membrane as a helical segment. Residues 492 to 506 (SYWGLHCETTYTKDG) lie on the Cytoplasmic side of the membrane. Residues 507 to 526 (FWTYITQIATCSPWMFWMFL) form a helical membrane-spanning segment. The Lumenal segment spans residues 527–529 (NSV). Residues 530–552 (FHFMWVAVLLMCQMYQITCLGIT) traverse the membrane as a helical segment. Residues 553-622 (TNERMNARRY…QISGSGYQLV (70 aa)) lie on the Cytoplasmic side of the membrane.

Belongs to the DHHC palmitoyltransferase family. AKR/ZDHHC17 subfamily. As to quaternary structure, interacts (via ANK repeats) with numerous proteins (via the consensus sequence motif [VIAP]-[VIT]-x-x-Q-P). Interacts (via ANK repeats) with CLIP3. Interacts (via ANK repeats) with HTT. Interacts (via ANK repeats) with DNAJC5 (via C-terminus). Interacts (via ANK repeats) with MAP6. Interacts (via ANK repeats) with SNAP23. Interacts (via ANK repeats) with SNAP25. Interacts (via ANK repeats) with EVL. Interacts with SPRED1 and SPRED3. Interacts with GPM6A and OPTN. May interact (via ANK repeats) with SPRED2. May interact with NTRK1; may regulate its localization and function. Autopalmitoylated. Autopalmitoylation has a regulatory role in ZDHHC17-mediated Mg(2+) transport.

It localises to the golgi apparatus membrane. The protein localises to the cytoplasmic vesicle membrane. Its subcellular location is the presynaptic cell membrane. It catalyses the reaction L-cysteinyl-[protein] + hexadecanoyl-CoA = S-hexadecanoyl-L-cysteinyl-[protein] + CoA. The enzyme catalyses L-cysteinyl-[protein] + tetradecanoyl-CoA = S-tetradecanoyl-L-cysteinyl-[protein] + CoA. It carries out the reaction L-cysteinyl-[protein] + octadecanoyl-CoA = S-octadecanoyl-L-cysteinyl-[protein] + CoA. In terms of biological role, palmitoyltransferase that catalyzes the addition of palmitate onto various protein substrates and is involved in a variety of cellular processes. Has no stringent fatty acid selectivity and in addition to palmitate can also transfer onto target proteins myristate from tetradecanoyl-CoA and stearate from octadecanoyl-CoA. Palmitoyltransferase specific for a subset of neuronal proteins, including SNAP25, DLG4/PSD95, GAD2, SYT1 and HTT. Also palmitoylates neuronal protein GPM6A as well as SPRED1 and SPRED3. Could also play a role in axonogenesis through the regulation of NTRK1 and the downstream ERK1/ERK2 signaling cascade. May be involved in the sorting or targeting of critical proteins involved in the initiating events of endocytosis at the plasma membrane. May play a role in Mg(2+) transport. Could also palmitoylate DNAJC5 and regulate its localization to the Golgi membrane. Palmitoylates CASP6, thereby preventing its dimerization and subsequent activation. The protein is Palmitoyltransferase ZDHHC17 of Rattus norvegicus (Rat).